We begin with the raw amino-acid sequence, 306 residues long: tRNA pseudouridine synthase B (306 aa).

Asp-43 (nucleophile) is an active-site residue.

It belongs to the pseudouridine synthase TruB family. Type 1 subfamily.

It carries out the reaction uridine(55) in tRNA = pseudouridine(55) in tRNA. In terms of biological role, responsible for synthesis of pseudouridine from uracil-55 in the psi GC loop of transfer RNAs. This is tRNA pseudouridine synthase B from Lacticaseibacillus casei (strain BL23) (Lactobacillus casei).